The chain runs to 734 residues: Putative protocadherin beta-18 (734 aa).

Cadherin domains are found at residues 1–79 (MWKT…TPTF), 80–188 (LNNH…APEF), 189–293 (EKPV…PPEI), 294–398 (AMTS…APIF), and 399–508 (TQTS…SPFV). Asn-115 carries an N-linked (GlcNAc...) asparagine glycan. Residues Asn-365 and Asn-383 are each glycosylated (N-linked (GlcNAc...) asparagine). Asn-514 is a glycosylation site (N-linked (GlcNAc...) asparagine). The 107-residue stretch at 515–621 (GSAPCTELVP…GFSQPYLPLT (107 aa)) folds into the Cadherin 6 domain. The chain crosses the membrane as a helical span at residues 638-658 (VVALASVSSLFLFSVFLFVAV).

The protein resides in the cell membrane. In terms of biological role, potential calcium-dependent cell-adhesion protein. The protein is Putative protocadherin beta-18 (PCDHB18P) of Homo sapiens (Human).